A 194-amino-acid chain; its full sequence is Peptidyl-tRNA hydrolase (194 aa).

Tyr-17 lines the tRNA pocket. The active-site Proton acceptor is the His-22. Phe-68, Asn-70, and Asn-116 together coordinate tRNA.

The protein belongs to the PTH family. As to quaternary structure, monomer.

It is found in the cytoplasm. It carries out the reaction an N-acyl-L-alpha-aminoacyl-tRNA + H2O = an N-acyl-L-amino acid + a tRNA + H(+). In terms of biological role, hydrolyzes ribosome-free peptidyl-tRNAs (with 1 or more amino acids incorporated), which drop off the ribosome during protein synthesis, or as a result of ribosome stalling. Catalyzes the release of premature peptidyl moieties from peptidyl-tRNA molecules trapped in stalled 50S ribosomal subunits, and thus maintains levels of free tRNAs and 50S ribosomes. The protein is Peptidyl-tRNA hydrolase of Actinobacillus pleuropneumoniae serotype 5b (strain L20).